The primary structure comprises 3390 residues: Genome polyprotein (3390 aa).

Residues 1 to 15 (MNNQRKKTGKPSINM) form an interaction with host EXOC1 region. Over 1–100 (MNNQRKKTGK…MLSIINKRKK (100 aa)) the chain is Cytoplasmic. The segment at 37–72 (LLNGQGPMKLVMAFIAFLRFLAIPPTAGVLARWGTF) is hydrophobic; homodimerization of capsid protein C. A propeptide spans 101–114 (TSLCLMMIMPAALA) (ER anchor for the capsid protein C, removed in mature form by serine protease NS3). Residues 101–120 (TSLCLMMIMPAALAFHLTSR) traverse the membrane as a helical segment. At 121-243 (DGEPRMIVGK…VEKVETWALR (123 aa)) the chain is on the extracellular side. A glycan (N-linked (GlcNAc...) asparagine; by host) is linked at Asn183. Residues 244 to 264 (HPGFTILALFLAHYIGTSLTQ) form a helical membrane-spanning segment. Residue Lys265 is a topological domain, cytoplasmic. Residues 266 to 280 (VVIFILLMLVTPSMT) form a helical membrane-spanning segment. At 281-723 (MRCVGVGNRD…VHQIFGSAYT (443 aa)) the chain is on the extracellular side. 4 cysteine pairs are disulfide-bonded: Cys283-Cys310, Cys340-Cys401, Cys354-Cys385, and Cys372-Cys396. A glycan (N-linked (GlcNAc...) asparagine; by host) is linked at Asn347. The segment at 378 to 391 (DRGWGNGCGLFGKG) is fusion peptide. Residue Asn433 is glycosylated (N-linked (GlcNAc...) asparagine; by host). 2 disulfides stabilise this stretch: Cys463–Cys563 and Cys580–Cys611. Residues 724–744 (ALFSGVSWVMKIGIGVLLTWI) traverse the membrane as a helical segment. Over 745-750 (GLNSKN) the chain is Cytoplasmic. The chain crosses the membrane as a helical span at residues 751–771 (TSMSFSCIAIGIITLYLGAVV). The Extracellular portion of the chain corresponds to 772 to 1193 (QADMGCVINW…MIGSNASDRM (422 aa)). 6 disulfide bridges follow: Cys777/Cys788, Cys828/Cys916, Cys952/Cys996, Cys1053/Cys1102, Cys1064/Cys1086, and Cys1085/Cys1089. 2 N-linked (GlcNAc...) asparagine; by host glycosylation sites follow: Asn903 and Asn980. Asn1132 and Asn1188 each carry an N-linked (GlcNAc...) asparagine; by host glycan. A helical transmembrane segment spans residues 1194 to 1218 (GMGVTYLALIATFKIQPFLALGFFL). Over 1219-1224 (RKLTSR) the chain is Cytoplasmic. The chain crosses the membrane as a helical span at residues 1225–1243 (ENLLLGVGLAMATTLQLPE). Over 1244-1267 (DIEQMANGIALGLMALKLITQFET) the chain is Lumenal. The helical transmembrane segment at 1268–1288 (YQLWTALISLTCSNTMFTLTV) threads the bilayer. Residue Ala1289 is a topological domain, cytoplasmic. The chain crosses the membrane as a helical span at residues 1290–1308 (WRTATLILAGVSLLPVCQS). Residues 1309-1315 (SSMRKTD) are Lumenal-facing. Residues 1316–1336 (WLPMAVAAMGVPPLPLFIFSL) traverse the membrane as a helical segment. At 1337–1344 (KDTLKRRS) the chain is on the cytoplasmic side. A helical membrane pass occupies residues 1345 to 1365 (WPLNEGVMAVGLVSILASSLL). Over 1366–1368 (RND) the chain is Lumenal. The chain crosses the membrane as a helical span at residues 1369 to 1389 (VPMAGPLVAGGLLIACYVITG). Over 1390–1443 (TSADLTVEKAADITWEEEAEQTGVSHNLMITVDDDGTMRIKDDETENILTVLLK) the chain is Cytoplasmic. Positions 1396-1435 (VEKAADITWEEEAEQTGVSHNLMITVDDDGTMRIKDDETE) are interacts with and activates NS3 protease. Positions 1444-1464 (TALLIVSGVFPYSIPATLLVW) form an intramembrane region, helical. Residues 1465–2146 (HTWQKQTQRS…VEELPETMET (682 aa)) are Cytoplasmic-facing. Positions 1474-1651 (SGVLWDVPSP…NAEPDGPTPE (178 aa)) constitute a Peptidase S7 domain. Active-site charge relay system; for serine protease NS3 activity residues include His1524, Asp1548, and Ser1608. The 157-residue stretch at 1654-1810 (EEMFKKRNLT…QSNAPIQDEE (157 aa)) folds into the Helicase ATP-binding domain. The interval 1658-1661 (KKRN) is important for RNA-binding. Position 1667–1674 (1667–1674 (LHPGSGKT)) interacts with ATP. Positions 1758–1761 (DEAH) match the DEAH box motif. In terms of domain architecture, Helicase C-terminal spans 1820 to 1986 (SGNEWITDFA…GIIPALFEPE (167 aa)). Lys1862 carries the N6-acetyllysine; by host modification. Residues 2147-2167 (LLLLGLMILLTGGAMLFLISG) traverse the membrane as a helical segment. Over 2168–2169 (KG) the chain is Lumenal. An intramembrane region (helical) is located at residues 2170-2190 (IGKTSIGLICVIASSGMLWMA). Residue Glu2191 is a topological domain, lumenal. The helical transmembrane segment at 2192–2212 (IPLQWIASAIVLEFFMMVLLI) threads the bilayer. The Cytoplasmic segment spans residues 2213–2227 (PEPEKQRTPQDNQLA). The helical transmembrane segment at 2228–2248 (YVVIGILTLAAIIAANEMGLL) threads the bilayer. The Lumenal portion of the chain corresponds to 2249 to 2273 (ETTKRDLGMSKEPGVVSPTSYLDVD). An intramembrane region (helical) is located at residues 2274-2294 (LHPASAWTLYAVATTVITPML). The Lumenal portion of the chain corresponds to 2295 to 2305 (RHTIENSTANV). Residues Asn2300 and Asn2304 are each glycosylated (N-linked (GlcNAc...) asparagine; by host). The segment at residues 2306 to 2326 (SLAAIANQAVVLMGLDKGWPI) is an intramembrane region (helical). Residues 2327–2346 (SKMDLGVPLLALGCYSQVNP) lie on the Lumenal side of the membrane. Residues 2347–2367 (LTLTAAVLLLITHYAIIGPGL) traverse the membrane as a helical segment. At 2368–2412 (QAKATREAQKRTAAGIMKNPTVDGIMTIDLDPVIYDSKFEKQLGQ) the chain is on the cytoplasmic side. A helical transmembrane segment spans residues 2413–2433 (VMLLVLCAVQLLLMRTSWALC). At 2434 to 2458 (EALTLATGPITTLWEGSPGKFWNTT) the chain is on the lumenal side. N-linked (GlcNAc...) asparagine; by host glycosylation is present at Asn2456. The helical transmembrane segment at 2459-2479 (IAVSMANIFRGSYLAGAGLAF) threads the bilayer. The Cytoplasmic segment spans residues 2480 to 3390 (SIMKSVGTGK…KEEESEGAIW (911 aa)). An mRNA cap 0-1 NS5-type MT domain is found at 2492–2753 (TGSQGETLGE…DVDLGAGTRH (262 aa)). S-adenosyl-L-methionine is bound at residue Ser2546. Phosphoserine is present on Ser2546. The active-site For 2'-O-MTase activity is the Lys2551. The SUMO-interacting motif motif lies at 2567–2570 (VIDL). Gly2576, Trp2577, Thr2594, Lys2595, Asp2621, and Val2622 together coordinate S-adenosyl-L-methionine. The active-site For 2'-O-MTase activity is the Asp2636. Ile2637 provides a ligand contact to S-adenosyl-L-methionine. Active-site for 2'-O-MTase activity residues include Lys2670 and Glu2706. Tyr2708 lines the S-adenosyl-L-methionine pocket. Zn(2+)-binding residues include Glu2927, His2931, Cys2936, and Cys2939. The RdRp catalytic domain occupies 3018–3168 (AMYADDTAGW…PIDDRFANAL (151 aa)). The Zn(2+) site is built by His3202, Cys3218, and Cys3337.

This sequence in the N-terminal section; belongs to the class I-like SAM-binding methyltransferase superfamily. mRNA cap 0-1 NS5-type methyltransferase family. Homodimer. Interacts (via N-terminus) with host EXOC1 (via C-terminus); this interaction results in EXOC1 degradation through the proteasome degradation pathway. In terms of assembly, forms heterodimers with envelope protein E in the endoplasmic reticulum and Golgi. As to quaternary structure, homodimer; in the endoplasmic reticulum and Golgi. Interacts with protein prM. Interacts with non-structural protein 1. Homodimer; Homohexamer when secreted. Interacts with envelope protein E. In terms of assembly, interacts (via N-terminus) with serine protease NS3. As to quaternary structure, forms a heterodimer with serine protease NS3. May form homooligomers. Forms a heterodimer with NS2B. Interacts with NS4B. Interacts with unphosphorylated RNA-directed RNA polymerase NS5; this interaction stimulates RNA-directed RNA polymerase NS5 guanylyltransferase activity. In terms of assembly, interacts with host MAVS; this interaction inhibits the synthesis of IFN-beta. Interacts with host AUP1; the interaction occurs in the presence of Dengue virus NS4B and induces lipophagy which facilitates production of virus progeny particles. As to quaternary structure, interacts with serine protease NS3. Homodimer. Interacts with host STAT2; this interaction inhibits the phosphorylation of the latter, and, when all viral proteins are present (polyprotein), targets STAT2 for degradation. Interacts with serine protease NS3. In terms of processing, specific enzymatic cleavages in vivo yield mature proteins. Cleavages in the lumen of endoplasmic reticulum are performed by host signal peptidase, whereas cleavages in the cytoplasmic side are performed by serine protease NS3. Signal cleavage at the 2K-4B site requires a prior NS3 protease-mediated cleavage at the 4A-2K site. Post-translationally, cleaved in post-Golgi vesicles by a host furin, releasing the mature small envelope protein M, and peptide pr. This cleavage is incomplete as up to 30% of viral particles still carry uncleaved prM. N-glycosylated. In terms of processing, N-glycosylated. The excreted form is glycosylated and this is required for efficient secretion of the protein from infected cells. Post-translationally, acetylated by host KAT5. Acetylation modulates NS3 RNA-binding and unwinding activities and plays an important positive role for viral replication. Sumoylation of RNA-directed RNA polymerase NS5 increases NS5 protein stability allowing proper viral RNA replication. In terms of processing, phosphorylated on serines residues. This phosphorylation may trigger NS5 nuclear localization.

Its subcellular location is the virion. It localises to the host nucleus. The protein localises to the host cytoplasm. It is found in the host perinuclear region. The protein resides in the secreted. Its subcellular location is the virion membrane. It localises to the host endoplasmic reticulum membrane. The protein localises to the host mitochondrion. The enzyme catalyses Selective hydrolysis of -Xaa-Xaa-|-Yaa- bonds in which each of the Xaa can be either Arg or Lys and Yaa can be either Ser or Ala.. The catalysed reaction is RNA(n) + a ribonucleoside 5'-triphosphate = RNA(n+1) + diphosphate. It carries out the reaction a ribonucleoside 5'-triphosphate + H2O = a ribonucleoside 5'-diphosphate + phosphate + H(+). It catalyses the reaction ATP + H2O = ADP + phosphate + H(+). The enzyme catalyses a 5'-end (5'-triphosphoguanosine)-ribonucleoside in mRNA + S-adenosyl-L-methionine = a 5'-end (N(7)-methyl 5'-triphosphoguanosine)-ribonucleoside in mRNA + S-adenosyl-L-homocysteine. The catalysed reaction is a 5'-end (N(7)-methyl 5'-triphosphoguanosine)-ribonucleoside in mRNA + S-adenosyl-L-methionine = a 5'-end (N(7)-methyl 5'-triphosphoguanosine)-(2'-O-methyl-ribonucleoside) in mRNA + S-adenosyl-L-homocysteine + H(+). Its function is as follows. Plays a role in virus budding by binding to the cell membrane and gathering the viral RNA into a nucleocapsid that forms the core of a mature virus particle. During virus entry, may induce genome penetration into the host cytoplasm after hemifusion induced by the surface proteins. Can migrate to the cell nucleus where it modulates host functions. Overcomes the anti-viral effects of host EXOC1 by sequestering and degrading the latter through the proteasome degradation pathway. In terms of biological role, inhibits RNA silencing by interfering with host Dicer. Functionally, prevents premature fusion activity of envelope proteins in trans-Golgi by binding to envelope protein E at pH6.0. After virion release in extracellular space, gets dissociated from E dimers. Acts as a chaperone for envelope protein E during intracellular virion assembly by masking and inactivating envelope protein E fusion peptide. prM is the only viral peptide matured by host furin in the trans-Golgi network probably to avoid catastrophic activation of the viral fusion activity in acidic Golgi compartment prior to virion release. prM-E cleavage is inefficient, and many virions are only partially matured. These uncleaved prM would play a role in immune evasion. Its function is as follows. May play a role in virus budding. Exerts cytotoxic effects by activating a mitochondrial apoptotic pathway through M ectodomain. May display a viroporin activity. In terms of biological role, binds to host cell surface receptor and mediates fusion between viral and cellular membranes. Envelope protein is synthesized in the endoplasmic reticulum in the form of heterodimer with protein prM. They play a role in virion budding in the ER, and the newly formed immature particle is covered with 60 spikes composed of heterodimer between precursor prM and envelope protein E. The virion is transported to the Golgi apparatus where the low pH causes dissociation of PrM-E heterodimers and formation of E homodimers. prM-E cleavage is inefficient, and many virions are only partially matured. These uncleaved prM would play a role in immune evasion. Functionally, involved in immune evasion, pathogenesis and viral replication. Once cleaved off the polyprotein, is targeted to three destinations: the viral replication cycle, the plasma membrane and the extracellular compartment. Essential for viral replication. Required for formation of the replication complex and recruitment of other non-structural proteins to the ER-derived membrane structures. Excreted as a hexameric lipoparticle that plays a role against host immune response. Antagonizing the complement function. Binds to the host macrophages and dendritic cells. Inhibits signal transduction originating from Toll-like receptor 3 (TLR3). Disrupts the host endothelial glycocalyx layer of host pulmonary microvascular endothelial cells, inducing degradation of sialic acid and shedding of heparan sulfate proteoglycans. NS1 induces expression of sialidases, heparanase, and activates cathepsin L, which activates heparanase via enzymatic cleavage. These effects are probably linked to the endothelial hyperpermeability observed in severe dengue disease. Its function is as follows. Component of the viral RNA replication complex that functions in virion assembly and antagonizes the host immune response. In terms of biological role, required cofactor for the serine protease function of NS3. May have membrane-destabilizing activity and form viroporins. Functionally, displays three enzymatic activities: serine protease, NTPase and RNA helicase. NS3 serine protease, in association with NS2B, performs its autocleavage and cleaves the polyprotein at dibasic sites in the cytoplasm: C-prM, NS2A-NS2B, NS2B-NS3, NS3-NS4A, NS4A-2K and NS4B-NS5. NS3 RNA helicase binds RNA and unwinds dsRNA in the 3' to 5' direction. Regulates the ATPase activity of the NS3 helicase activity. NS4A allows NS3 helicase to conserve energy during unwinding. Plays a role in the inhibition of the host innate immune response. Interacts with host MAVS and thereby prevents the interaction between RIGI and MAVS. In turn, IFN-beta production is impaired. Interacts with host AUP1 which mediates induction of lipophagy in host cells and facilitates production of virus progeny particles. Its function is as follows. Functions as a signal peptide for NS4B and is required for the interferon antagonism activity of the latter. In terms of biological role, induces the formation of ER-derived membrane vesicles where the viral replication takes place. Inhibits interferon (IFN)-induced host STAT1 phosphorylation and nuclear translocation, thereby preventing the establishment of cellular antiviral state by blocking the IFN-alpha/beta pathway. Functionally, replicates the viral (+) and (-) RNA genome, and performs the capping of genomes in the cytoplasm. NS5 methylates viral RNA cap at guanine N-7 and ribose 2'-O positions. Besides its role in RNA genome replication, also prevents the establishment of cellular antiviral state by blocking the interferon-alpha/beta (IFN-alpha/beta) signaling pathway. Inhibits host TYK2 and STAT2 phosphorylation, thereby preventing activation of JAK-STAT signaling pathway. The polypeptide is Genome polyprotein (pol) (Dengue virus type 3 (strain Martinique/1243/1999) (DENV-3)).